The following is a 349-amino-acid chain: Short-wave-sensitive opsin 1 (349 aa).

Topologically, residues 1 to 34 (MSKMSEEEEFLLFKNISLVGPWDGPQYHLAPVWA) are extracellular. N-linked (GlcNAc...) asparagine glycosylation is present at Asn-15. Residues 35-59 (FHLQAVFMGFVFFVGTPLNATVLVA) form a helical membrane-spanning segment. Over 60–71 (TLRYRKLRQPLN) the chain is Cytoplasmic. The helical transmembrane segment at 72-97 (YILVNVSLGGFIYCIFSVFIVFITSC) threads the bilayer. Topologically, residues 98–111 (YGYFVFGRHVCALE) are extracellular. An intrachain disulfide couples Cys-108 to Cys-185. The helical transmembrane segment at 112 to 131 (AFLGCTAGLVTGWSLAFLAF) threads the bilayer. At 132 to 150 (ERYIIICKPFGNFRFSSKH) the chain is on the cytoplasmic side. The helical transmembrane segment at 151–174 (ALMVVVATWTIGIGVSIPPFFGWS) threads the bilayer. The Extracellular segment spans residues 175–200 (RFVPEGLQCSCGPDWYTVGTKYYSEY). A helical membrane pass occupies residues 201–228 (YTWFLFIFCYIVPLSLICFSYSQLLGAL). The Cytoplasmic portion of the chain corresponds to 229-250 (RAVAAQQQESASTQKAEREVSH). The helical transmembrane segment at 251-274 (MVVVMVGSFCLCYTPYAALAMYIV) threads the bilayer. Over 275 to 282 (NNRNHGVD) the chain is Extracellular. The helical transmembrane segment at 283–307 (LRLVTIPAFFSKSACVYNPIIYCFM) threads the bilayer. Residue Lys-294 is modified to N6-(retinylidene)lysine. At 308-349 (NKQFRACIMEMVCGKPMTDESELSSSQKTEVSTVSSSQVGPN) the chain is on the cytoplasmic side. Positions 327-349 (ESELSSSQKTEVSTVSSSQVGPN) are disordered. A compositionally biased stretch (polar residues) spans 330-349 (LSSSQKTEVSTVSSSQVGPN).

This sequence belongs to the G-protein coupled receptor 1 family. Opsin subfamily. In terms of processing, phosphorylated on some or all of the serine and threonine residues present in the C-terminal region.

The protein localises to the cell membrane. It is found in the photoreceptor inner segment. Its subcellular location is the cell projection. The protein resides in the cilium. It localises to the photoreceptor outer segment. The protein localises to the cytoplasm. It is found in the perinuclear region. Visual pigments are the light-absorbing molecules that mediate vision. They consist of an apoprotein, opsin, covalently linked to cis-retinal. Required for the maintenance of cone outer segment organization in the ventral retina, but not essential for the maintenance of functioning cone photoreceptors. Involved in ensuring correct abundance and localization of retinal membrane proteins. May increase spectral sensitivity in dim light. This Bos taurus (Bovine) protein is Short-wave-sensitive opsin 1 (OPN1SW).